The chain runs to 127 residues: UPF0102 protein Gura_3756 (127 aa).

Belongs to the UPF0102 family.

The polypeptide is UPF0102 protein Gura_3756 (Geotalea uraniireducens (strain Rf4) (Geobacter uraniireducens)).